Here is a 310-residue protein sequence, read N- to C-terminus: Lipoyl synthase (310 aa).

Residues cysteine 61, cysteine 66, cysteine 72, cysteine 87, cysteine 91, cysteine 94, and serine 300 each contribute to the [4Fe-4S] cluster site. A Radical SAM core domain is found at 73–289 (FNNGTATFMI…EYIALSLGFS (217 aa)).

Belongs to the radical SAM superfamily. Lipoyl synthase family. The cofactor is [4Fe-4S] cluster.

Its subcellular location is the cytoplasm. It catalyses the reaction [[Fe-S] cluster scaffold protein carrying a second [4Fe-4S](2+) cluster] + N(6)-octanoyl-L-lysyl-[protein] + 2 oxidized [2Fe-2S]-[ferredoxin] + 2 S-adenosyl-L-methionine + 4 H(+) = [[Fe-S] cluster scaffold protein] + N(6)-[(R)-dihydrolipoyl]-L-lysyl-[protein] + 4 Fe(3+) + 2 hydrogen sulfide + 2 5'-deoxyadenosine + 2 L-methionine + 2 reduced [2Fe-2S]-[ferredoxin]. The protein operates within protein modification; protein lipoylation via endogenous pathway; protein N(6)-(lipoyl)lysine from octanoyl-[acyl-carrier-protein]: step 2/2. Catalyzes the radical-mediated insertion of two sulfur atoms into the C-6 and C-8 positions of the octanoyl moiety bound to the lipoyl domains of lipoate-dependent enzymes, thereby converting the octanoylated domains into lipoylated derivatives. In Buchnera aphidicola subsp. Cinara cedri (strain Cc), this protein is Lipoyl synthase.